A 472-amino-acid polypeptide reads, in one-letter code: Argininosuccinate lyase (472 aa).

The protein belongs to the lyase 1 family. Argininosuccinate lyase subfamily.

Its subcellular location is the cytoplasm. The catalysed reaction is 2-(N(omega)-L-arginino)succinate = fumarate + L-arginine. Its pathway is amino-acid biosynthesis; L-arginine biosynthesis; L-arginine from L-ornithine and carbamoyl phosphate: step 3/3. The sequence is that of Argininosuccinate lyase from Polynucleobacter necessarius subsp. necessarius (strain STIR1).